The chain runs to 513 residues: QWRF motif-containing protein 9 (513 aa).

3 stretches are compositionally biased toward polar residues: residues 1-26 (MTAA…PSES), 43-55 (GTSS…SPKR), and 65-78 (VTPS…PQST). Disordered stretches follow at residues 1–89 (MTAA…RREV), 115–144 (GTLE…LSDQ), and 184–293 (VSNR…LRVR). The segment covering 79–89 (PRRESLDRREV) has biased composition (basic and acidic residues). Composition is skewed to polar residues over residues 202–211 (ESVSSGSSNG) and 244–262 (VDSS…SPRG). Residues 334–337 (QWQF) carry the QWRF motif motif.

Belongs to the QWRF family.

The chain is QWRF motif-containing protein 9 (QWRF9) from Arabidopsis thaliana (Mouse-ear cress).